A 139-amino-acid chain; its full sequence is MKPAARRRARECAVQALYSWQLSQNDIADVEYQFLAEQDVKDVDVLYFRELLSGVATNSAYLDGLMKPYLSRLLEELGQVEKAVLRIALFELAKRDDVPYKVAINEAIELAKTFGAEDSHKFVNGVLDKAAPAIRPRKK.

Belongs to the NusB family.

Involved in transcription antitermination. Required for transcription of ribosomal RNA (rRNA) genes. Binds specifically to the boxA antiterminator sequence of the ribosomal RNA (rrn) operons. This chain is Transcription antitermination protein NusB, found in Enterobacter sp. (strain 638).